The sequence spans 235 residues: Auracyanin-B (235 aa).

Positions 1 to 21 (MSWRGSGRSNFRSRSSSNGGS) are enriched in low complexity. 2 disordered regions span residues 1–27 (MSWRGSGRSNFRSRSSSNGGSTFSGGS) and 64–107 (ATPR…NVVN). The N-terminal stretch at 1–56 (MSWRGSGRSNFRSRSSSNGGSTFSGGSAGGPPLIVMMGLAFGAGLIMLIVMIASNA) is a signal peptide. A propeptide spanning residues 57–80 (TAGGFVAATPRPTATPRPTAAPAP) is cleaved from the precursor. Residues 69 to 86 (TATPRPTAAPAPTQPPAA) show a composition bias toward pro residues. The span at 87 to 100 (QPTTAPATQAANAP) shows a compositional bias: low complexity. One can recognise a Plastocyanin-like domain in the interval 111 to 235 (AQTVEVRAAP…GMKGTLTVTP (125 aa)). 4 residues coordinate Cu cation: His-152, Cys-217, His-222, and Met-227.

This sequence belongs to the multicopper oxidase family. Requires Cu cation as cofactor. In terms of processing, glycosylated.

It is found in the cell membrane. In terms of biological role, probably a soluble electron acceptor for the integral membrane protein electron transfer alternative complex III (ACIII). The chain is Auracyanin-B from Chloroflexus aurantiacus (strain ATCC 29366 / DSM 635 / J-10-fl).